Here is a 188-residue protein sequence, read N- to C-terminus: GMP synthase [glutamine-hydrolyzing] subunit A (188 aa).

One can recognise a Glutamine amidotransferase type-1 domain in the interval 1–188 (MIVIMDNGGQ…RNFAELCGEL (188 aa)). Residue cysteine 78 is the Nucleophile of the active site. Residues histidine 165 and glutamate 167 contribute to the active site.

In terms of assembly, heterodimer composed of a glutamine amidotransferase subunit (A) and a GMP-binding subunit (B).

The catalysed reaction is XMP + L-glutamine + ATP + H2O = GMP + L-glutamate + AMP + diphosphate + 2 H(+). It functions in the pathway purine metabolism; GMP biosynthesis; GMP from XMP (L-Gln route): step 1/1. In terms of biological role, catalyzes the synthesis of GMP from XMP. The polypeptide is GMP synthase [glutamine-hydrolyzing] subunit A (Thermococcus kodakarensis (strain ATCC BAA-918 / JCM 12380 / KOD1) (Pyrococcus kodakaraensis (strain KOD1))).